The sequence spans 273 residues: Large ribosomal subunit protein uL2c (273 aa).

The protein belongs to the universal ribosomal protein uL2 family. Part of the 50S ribosomal subunit.

It is found in the plastid. The protein resides in the apicoplast. This chain is Large ribosomal subunit protein uL2c (rpl2), found in Eimeria tenella (Coccidian parasite).